A 451-amino-acid polypeptide reads, in one-letter code: Probable D-serine dehydratase (451 aa).

A disordered region spans residues 1–55; that stretch reads MPGRTRPSCRLAITFTPRPDSATPRAGRAAPATGRRSNRSRSTLSATASPMPRRP. Positions 22-35 are enriched in low complexity; it reads ATPRAGRAAPATGR. Lys118 carries the post-translational modification N6-(pyridoxal phosphate)lysine.

The protein belongs to the serine/threonine dehydratase family. DsdA subfamily. Pyridoxal 5'-phosphate serves as cofactor.

It carries out the reaction D-serine = pyruvate + NH4(+). In Paracidovorax citrulli (strain AAC00-1) (Acidovorax citrulli), this protein is Probable D-serine dehydratase.